Here is a 141-residue protein sequence, read N- to C-terminus: Probable mitochondrial pyruvate carrier 1 (141 aa).

Helical transmembrane passes span 31–52 and 60–82; these read YLCS…AAIL and LISG…YAWM.

It belongs to the mitochondrial pyruvate carrier (MPC) (TC 2.A.105) family. In terms of assembly, the functional 150 kDa pyruvate import complex is a heteromer of mpc1 and mpc2.

The protein localises to the mitochondrion. It is found in the mitochondrion inner membrane. Mediates the uptake of pyruvate into mitochondria. This chain is Probable mitochondrial pyruvate carrier 1, found in Schizosaccharomyces pombe (strain 972 / ATCC 24843) (Fission yeast).